A 387-amino-acid polypeptide reads, in one-letter code: Phosphoglycerate kinase (387 aa).

Substrate-binding positions include 21-23 (DLN), arginine 36, 59-62 (HLGR), arginine 113, and arginine 146. Residues lysine 197, glutamate 314, and 340-343 (GGDT) contribute to the ATP site.

This sequence belongs to the phosphoglycerate kinase family. Monomer.

The protein localises to the cytoplasm. It catalyses the reaction (2R)-3-phosphoglycerate + ATP = (2R)-3-phospho-glyceroyl phosphate + ADP. It participates in carbohydrate degradation; glycolysis; pyruvate from D-glyceraldehyde 3-phosphate: step 2/5. The sequence is that of Phosphoglycerate kinase from Aeromonas hydrophila subsp. hydrophila (strain ATCC 7966 / DSM 30187 / BCRC 13018 / CCUG 14551 / JCM 1027 / KCTC 2358 / NCIMB 9240 / NCTC 8049).